The primary structure comprises 416 residues: Transmembrane protease serine 11B (416 aa).

The Cytoplasmic segment spans residues 1-17 (MYRHGISSQRSWPLWTT). A helical; Signal-anchor for type II membrane protein membrane pass occupies residues 18–38 (IFIFLGVAAILGVTIGLLVHF). Over 39–416 (LAVEKTYYYQ…RNWITSKTGL (378 aa)) the chain is Extracellular. In terms of domain architecture, SEA spans 43 to 160 (KTYYYQGDFH…ASIKLMEISK (118 aa)). Residues Asn72 and Asn107 are each glycosylated (N-linked (GlcNAc...) asparagine). The 231-residue stretch at 185-415 (IVNGKSSLEG…YRNWITSKTG (231 aa)) folds into the Peptidase S1 domain. Cys210 and Cys226 are disulfide-bonded. Catalysis depends on charge relay system residues His225 and Asp270. N-linked (GlcNAc...) asparagine glycosylation occurs at Asn315. 2 disulfide bridges follow: Cys335–Cys351 and Cys362–Cys391. Ser366 functions as the Charge relay system in the catalytic mechanism.

This sequence belongs to the peptidase S1 family.

It is found in the cell membrane. With respect to regulation, inhibited by aprotinin, leupeptin, benzamidine, SERPINA1, SPINT1 and SPINT2. In terms of biological role, serine protease. This Homo sapiens (Human) protein is Transmembrane protease serine 11B (TMPRSS11B).